Here is a 196-residue protein sequence, read N- to C-terminus: Probable malonic semialdehyde reductase RutE (196 aa).

The protein belongs to the nitroreductase family. HadB/RutE subfamily. FMN serves as cofactor.

The enzyme catalyses 3-hydroxypropanoate + NADP(+) = 3-oxopropanoate + NADPH + H(+). Its function is as follows. May reduce toxic product malonic semialdehyde to 3-hydroxypropionic acid, which is excreted. The sequence is that of Probable malonic semialdehyde reductase RutE from Cronobacter sakazakii (strain ATCC BAA-894) (Enterobacter sakazakii).